The sequence spans 181 residues: Large ribosomal subunit protein uL5 (181 aa).

The protein belongs to the universal ribosomal protein uL5 family. As to quaternary structure, part of the 50S ribosomal subunit; part of the 5S rRNA/L5/L18/L25 subcomplex. Contacts the 5S rRNA and the P site tRNA. Forms a bridge to the 30S subunit in the 70S ribosome.

Its function is as follows. This is one of the proteins that bind and probably mediate the attachment of the 5S RNA into the large ribosomal subunit, where it forms part of the central protuberance. In the 70S ribosome it contacts protein S13 of the 30S subunit (bridge B1b), connecting the 2 subunits; this bridge is implicated in subunit movement. Contacts the P site tRNA; the 5S rRNA and some of its associated proteins might help stabilize positioning of ribosome-bound tRNAs. This Helicobacter pylori (strain P12) protein is Large ribosomal subunit protein uL5.